A 323-amino-acid chain; its full sequence is Prenyl transferase (323 aa).

Isopentenyl diphosphate-binding residues include K46, R49, and H81. The Mg(2+) site is built by D88 and D92. Residue R97 coordinates an all-trans-polyprenyl diphosphate. R98 is an isopentenyl diphosphate binding site. 3 residues coordinate an all-trans-polyprenyl diphosphate: K174, T175, and Q212.

This sequence belongs to the FPP/GGPP synthase family. It depends on Mg(2+) as a cofactor.

Its subcellular location is the plastid. It is found in the chloroplast. Its function is as follows. Possible role in synthesis of the nonaprenyl side chain of plastoquinone or in synthesis of other prenyl chains such as undekaprenyl pyrophosphate. This chain is Prenyl transferase (preA), found in Porphyra purpurea (Red seaweed).